A 694-amino-acid polypeptide reads, in one-letter code: Putative bifunctional polynucleotide kinase/RNA ligase (694 aa).

The interval 1–385 is ligase domain; that stretch reads MLHVSRLLAN…TKQALNNKLA (385 aa). Positions 394–694 are bifunctional 5'-OH polynucleotide kinase/polynucleotide 3'-phosphatase; it reads KQLLVLIGIS…FNVCRDYLEF (301 aa). 401–408 lines the ATP pocket; it reads GISGSGKS.

It catalyses the reaction a 5'-end dephospho-2'-deoxyribonucleoside-DNA + ATP = a 5'-end 5'-phospho-2'-deoxyribonucleoside-DNA + ADP + H(+). The catalysed reaction is ATP + (ribonucleotide)n-3'-hydroxyl + 5'-phospho-(ribonucleotide)m = (ribonucleotide)n+m + AMP + diphosphate.. Functionally, trifunctional enzyme that possesses a bifunctional polynucleotide kinase/phosphatase activity and an ATP-dependent RNA ligase activity. May therefore play a role to evade an RNA damage-based host response. This Autographa californica nuclear polyhedrosis virus (AcMNPV) protein is Putative bifunctional polynucleotide kinase/RNA ligase (PNK/PNL).